The following is a 554-amino-acid chain: Hydroxylamine reductase (554 aa).

Residues Cys3, Cys6, Cys18, and Cys25 each contribute to the [2Fe-2S] cluster site. Residues His252, Glu276, Cys320, Cys408, Cys436, Cys461, Glu495, and Lys497 each coordinate hybrid [4Fe-2O-2S] cluster. Residue Cys408 is modified to Cysteine persulfide.

The protein belongs to the HCP family. The cofactor is [2Fe-2S] cluster. It depends on hybrid [4Fe-2O-2S] cluster as a cofactor.

It is found in the cytoplasm. It catalyses the reaction A + NH4(+) + H2O = hydroxylamine + AH2 + H(+). In terms of biological role, catalyzes the reduction of hydroxylamine to form NH(3) and H(2)O. This is Hydroxylamine reductase from Shewanella baltica (strain OS185).